The sequence spans 226 residues: Large ribosomal subunit protein uL3 (226 aa).

Gln160 bears the N5-methylglutamine mark.

It belongs to the universal ribosomal protein uL3 family. In terms of assembly, part of the 50S ribosomal subunit. Forms a cluster with proteins L14 and L19. Post-translationally, methylated by PrmB.

In terms of biological role, one of the primary rRNA binding proteins, it binds directly near the 3'-end of the 23S rRNA, where it nucleates assembly of the 50S subunit. This chain is Large ribosomal subunit protein uL3, found in Leptothrix cholodnii (strain ATCC 51168 / LMG 8142 / SP-6) (Leptothrix discophora (strain SP-6)).